We begin with the raw amino-acid sequence, 148 residues long: Receptor activity-modifying protein 1 (148 aa).

An N-terminal signal peptide occupies residues 1 to 26; sequence MAPGLRGLPRRGLWLLLAHHLFMVTA. Intrachain disulfides connect Cys27–Cys82, Cys40–Cys72, and Cys57–Cys104. The Extracellular portion of the chain corresponds to 27–118; sequence CRDPDYGTLI…RALRDPPNSI (92 aa). The chain crosses the membrane as a helical span at residues 119 to 140; the sequence is LCPFIVLPITVTLLMTALVVWR. Residues 141-148 lie on the Cytoplasmic side of the membrane; it reads SKRTEGIV.

This sequence belongs to the RAMP family. As to quaternary structure, heterodimer of CALCRL and RAMP1; the interaction induces allosteric modulation of CALCRL function and CGRP1/CALCA and CGRP2/CALCB ligand specificity. Heterodimer of CALCR and RAMP1; interaction forms the AMYR1 receptor complex for amylin/IAPP and CGRP1/CALCA ligands.

It is found in the cell membrane. In terms of biological role, accessory protein that interacts with and modulates the function of G-protein coupled receptors including calcitonin gene-related peptide type 1 receptor (CALCRL) and calcitonin receptor (CALCR). Required for the transport of CALCRL to the plasma membrane. Together with CALCRL, form the receptor complex for the calcitonin gene-related peptides CGRP1/CALCA and CGRP2/CALCB. Together with CALCR, form the AMYR1 receptor complex for amylin/IAPP and CGRP1/CALCA. This is Receptor activity-modifying protein 1 from Rattus norvegicus (Rat).